The sequence spans 445 residues: Tubulin beta-2A chain (445 aa).

The short motif at Met-1–Ile-4 is the MREI motif element. A GTP-binding site is contributed by Gln-11. At Ser-40 the chain carries Phosphoserine. N6-acetyllysine; alternate is present on Lys-58. Position 58 is an N6-succinyllysine; alternate (Lys-58). Lys-58 is covalently cross-linked (Glycyl lysine isopeptide (Lys-Gly) (interchain with G-Cter in ubiquitin); alternate). GTP is bound by residues Glu-69, Ser-138, Gly-142, Thr-143, and Gly-144. Glu-69 is a binding site for Mg(2+). Ser-172 is subject to Phosphoserine; by CDK1. Asn-204 and Asn-226 together coordinate GTP. 2 positions are modified to phosphothreonine: Thr-285 and Thr-290. Position 318 is an omega-N-methylarginine (Arg-318). Lys-324 participates in a covalent cross-link: Glycyl lysine isopeptide (Lys-Gly) (interchain with G-Cter in ubiquitin). The disordered stretch occupies residues Tyr-422–Ala-445. Positions Thr-429 to Ala-445 are enriched in acidic residues. 5-glutamyl polyglutamate is present on Glu-438.

The protein belongs to the tubulin family. Interacts with ZNRF1. Part of a complex composed at least of ASH2L, EMSY, HCFC1, HSPA8, CCAR2, MATR3, MKI67, RBBP5, TUBB2A, WDR5 and ZNF335; this complex may have a histone H3-specific methyltransferase activity. Dimer of alpha and beta chains. A typical microtubule is a hollow water-filled tube with an outer diameter of 25 nm and an inner diameter of 15 nM. Alpha-beta heterodimers associate head-to-tail to form protofilaments running lengthwise along the microtubule wall with the beta-tubulin subunit facing the microtubule plus end conferring a structural polarity. Microtubules usually have 13 protofilaments but different protofilament numbers can be found in some organisms and specialized cells. Mg(2+) is required as a cofactor. In terms of processing, some glutamate residues at the C-terminus are polyglutamylated, resulting in polyglutamate chains on the gamma-carboxyl group. Polyglutamylation plays a key role in microtubule severing by spastin (SPAST). SPAST preferentially recognizes and acts on microtubules decorated with short polyglutamate tails: severing activity by SPAST increases as the number of glutamates per tubulin rises from one to eight, but decreases beyond this glutamylation threshold. Glutamylation is also involved in cilia motility. Post-translationally, some glutamate residues at the C-terminus are monoglycylated but not polyglycylated due to the absence of functional TTLL10 in human. Monoglycylation is mainly limited to tubulin incorporated into cilia and flagella axonemes, which is required for their stability and maintenance. Flagella glycylation controls sperm motility. Both polyglutamylation and monoglycylation can coexist on the same protein on adjacent residues, and lowering glycylation levels increases polyglutamylation, and reciprocally. Phosphorylated on Ser-172 by CDK1 during the cell cycle, from metaphase to telophase, but not in interphase. This phosphorylation inhibits tubulin incorporation into microtubules. High expression in brain, where it represents 30% of all beta-tubulins.

Its subcellular location is the cytoplasm. It is found in the cytoskeleton. Functionally, tubulin is the major constituent of microtubules, a cylinder consisting of laterally associated linear protofilaments composed of alpha- and beta-tubulin heterodimers. Microtubules grow by the addition of GTP-tubulin dimers to the microtubule end, where a stabilizing cap forms. Below the cap, tubulin dimers are in GDP-bound state, owing to GTPase activity of alpha-tubulin. This is Tubulin beta-2A chain (TUBB2A) from Homo sapiens (Human).